The primary structure comprises 565 residues: uncharacterized protein (565 aa).

5 helical membrane-spanning segments follow: residues Phe4–Val26, Gly33–Ala55, Ser68–Leu90, Tyr97–Phe119, and Ile162–Leu184. RCK C-terminal domains follow at residues Pro210–Glu295 and Val296–Val379. Helical transmembrane passes span Leu389 to Gly411, Gly415 to Ile432, Leu453 to Thr472, Ile482 to Ile504, and Trp539 to Met561.

The protein belongs to the AAE transporter (TC 2.A.81) family.

It is found in the cell membrane. This is an uncharacterized protein from Bordetella parapertussis (strain 12822 / ATCC BAA-587 / NCTC 13253).